The primary structure comprises 367 residues: Cystinosin (367 aa).

The N-terminal stretch at 1 to 22 (MIRNWLTIFILFPLKLVEKCES) is a signal peptide. At 23–125 (SVSLTVPPVV…LVIRSSAISI (103 aa)) the chain is on the lumenal side. 3 N-linked (GlcNAc...) (high mannose) asparagine glycosylation sites follow: asparagine 36, asparagine 41, and asparagine 51. The N-linked (GlcNAc...) asparagine glycan is linked to asparagine 66. 3 N-linked (GlcNAc...) (high mannose) asparagine glycosylation sites follow: asparagine 84, asparagine 104, and asparagine 107. The PQ-loop 1 domain maps to 123–189 (ISIINQVIGW…LLWVPYIKEQ (67 aa)). The chain crosses the membrane as a helical span at residues 126–150 (INQVIGWIYFVAWSISFYPQVIMNW). Over 151–159 (RRKSVIGLS) the chain is Cytoplasmic. Residues 160-179 (FDFVALNLTGFVAYSVFNIG) form a helical membrane-spanning segment. Asparagine 166 contributes to the L-cystine binding site. Residues 180-202 (LLWVPYIKEQFLLKYPNGVNPVN) lie on the Lumenal side of the membrane. Residues 203–225 (SNDVFFSLHAVVLTLIIIVQCCL) form a helical membrane-spanning segment. Aspartate 205 contacts H(+). Residues 226–234 (YERGGQRVS) are Cytoplasmic-facing. Residues 235 to 257 (WPAIGFLVLAWLFAFVTMIVAAV) traverse the membrane as a helical segment. The Lumenal portion of the chain corresponds to 258–263 (GVTTWL). Positions 263–328 (LQFLFCFSYI…QSYNNDQWTL (66 aa)) constitute a PQ-loop 2 domain. The chain crosses the membrane as a helical span at residues 264-289 (QFLFCFSYIKLAVTLVKYFPQAYMNF). Residues lysine 273, lysine 280, and tyrosine 281 each contribute to the L-cystine site. Residues 290–298 (YYKSTEGWS) are Cytoplasmic-facing. A helical membrane pass occupies residues 299–308 (IGNVLLDFTG). The L-cystine site is built by asparagine 301 and aspartate 305. Residue aspartate 305 participates in H(+) binding. Over 309–331 (GSFSLLQMFLQSYNNDQWTLIFG) the chain is Lumenal. The helical transmembrane segment at 332–354 (DPTKFGLGVFSIVFDVVFFIQHF) threads the bilayer. H(+) is bound at residue aspartate 346. Over 355-367 (CLYRKRPGYDQLN) the chain is Cytoplasmic. The Lysosomal targeting motif signature appears at 362 to 366 (GYDQL).

It belongs to the cystinosin family. Interacts with components of the V-ATPase complex. Interacts with components of the Ragulator complex. Interacts with RRAGA/RagA and RRAGC/RagC. Interacts with AP-3 complex subunit mu (AP3M1 or AP3M2). As to expression, strongly expressed in pancreas, kidney (adult and fetal), skeletal muscle, melanocytes and keratinocytes. Expressed at lower levels in placenta and heart. Weakly expressed in lung, liver and brain (adult and fetal). In terms of tissue distribution, represents 5-20 % of CTNS transcripts, with the exception of the testis that expresses both isoforms in equal proportions.

It is found in the lysosome membrane. It localises to the melanosome membrane. The protein localises to the cell membrane. It carries out the reaction L-cystine(out) + H(+)(out) = L-cystine(in) + H(+)(in). With respect to regulation, switches between a lumen- and a cytosol-open conformation: pH induces conformational changes and shifts the equilibrium to facilitate the transition between the lumen- and cytosol-open conformation, thereby promoting cystine transport. Protonation of specific aspartate residues (Asp-205, Asp-305 and Asp-346) favors the cytosol-open conformation. Its function is as follows. Cystine/H(+) symporter that mediates export of cystine, the oxidized dimer of cysteine, from lysosomes. Plays an important role in melanin synthesis by catalyzing cystine export from melanosomes, possibly by inhibiting pheomelanin synthesis. In addition to cystine export, also acts as a positive regulator of mTORC1 signaling in kidney proximal tubular cells, via interactions with components of the v-ATPase and Ragulator complexes. Also involved in small GTPase-regulated vesicle trafficking and lysosomal localization of LAMP2A, independently of cystine transporter activity. This Homo sapiens (Human) protein is Cystinosin.